Reading from the N-terminus, the 337-residue chain is Glyceraldehyde-3-phosphate dehydrogenase (337 aa).

NAD(+)-binding positions include 13-14 (RI), aspartate 35, and lysine 80. D-glyceraldehyde 3-phosphate-binding positions include 151–153 (SCT), threonine 182, 211–212 (TG), and arginine 234. The Nucleophile role is filled by cysteine 152. Asparagine 316 is a binding site for NAD(+).

Belongs to the glyceraldehyde-3-phosphate dehydrogenase family. In terms of assembly, homotetramer.

It is found in the cytoplasm. The catalysed reaction is D-glyceraldehyde 3-phosphate + phosphate + NAD(+) = (2R)-3-phospho-glyceroyl phosphate + NADH + H(+). It participates in carbohydrate degradation; glycolysis; pyruvate from D-glyceraldehyde 3-phosphate: step 1/5. This chain is Glyceraldehyde-3-phosphate dehydrogenase (GAPD), found in Mycosarcoma maydis (Corn smut fungus).